Here is a 383-residue protein sequence, read N- to C-terminus: MKALHFGAGNIGRGFIGKLLADAQAELTFADVNQTVLDLLNSRKSYQVHVVGEQARVEQVNNVSAVNSGSEEAVALIAEADIVTTAVGPQILAKIAGTIAKGLSKRHQQGNSQPLNIIACENMVRGTSQLKQHVFDVLPQEDQAWALQHVGFVDSAVDRIVPPAEAGSSDPLEVTVETFSEWIVDQTQFKGQPPAIAGMELTDNLMAFVERKLFTLNTGHAITAYLGQQAGLQTIRDAILDPKIRQVVKGAMEESGAVLIKRYGFDAAKHAAYIDKILSRFENPYLHDDVERVGRQPLRKLSAGDRLIKPLLGTLEYGLPHANLIQGIAAAMSYRSEQDPQAKELVELLAKLGPKAALAQISGLPAESEVVEQAVAVYNAMQK.

NAD(+) is bound at residue 3–14 (ALHFGAGNIGRG).

This sequence belongs to the mannitol dehydrogenase family.

The catalysed reaction is D-mannitol 1-phosphate + NAD(+) = beta-D-fructose 6-phosphate + NADH + H(+). In Serratia proteamaculans (strain 568), this protein is Mannitol-1-phosphate 5-dehydrogenase.